Reading from the N-terminus, the 64-residue chain is Conotoxin Vc1.3 (64 aa).

The first 21 residues, 1–21, serve as a signal peptide directing secretion; the sequence is MGMRMMFTVFLLVVLATTVVS. A propeptide spanning residues 22–43 is cleaved from the precursor; it reads FTSDRASDGRKAAASDLITLTI. Intrachain disulfides connect Cys-46–Cys-52 and Cys-47–Cys-60. Cysteine amide is present on Cys-60.

Belongs to the conotoxin A superfamily. As to expression, expressed by the venom duct.

The protein localises to the secreted. Its function is as follows. May act as a toxin. The polypeptide is Conotoxin Vc1.3 (Conus victoriae (Queen Victoria cone)).